Consider the following 232-residue polypeptide: tRNA-uridine aminocarboxypropyltransferase (232 aa).

Zn(2+) is bound by residues Cys31, Cys34, Cys41, and Cys43. A DXTW motif is present at residues 137–140 (DGTW).

It belongs to the TDD superfamily. DTWD2 family. TapT subfamily. Monomer in solution.

It carries out the reaction a uridine in tRNA + S-adenosyl-L-methionine = a 3-[(3S)-3-amino-3-carboxypropyl]uridine in tRNA + S-methyl-5'-thioadenosine + H(+). The catalysed reaction is uridine(47) in tRNA(Phe) + S-adenosyl-L-methionine = 3-[(3S)-3-amino-3-carboxypropyl]uridine(47) in tRNA(Phe) + S-methyl-5'-thioadenosine + H(+). The degree of the acp3U modification at U47 is dependent on the presence of the m7G modification at the preceding nucleotide G46. It also depends on medium conditions. Catalyzes the formation of 3-(3-amino-3-carboxypropyl)uridine (acp3U) at position 47 of tRNAs. Acp3U47 confers thermal stability on tRNA. This is tRNA-uridine aminocarboxypropyltransferase from Escherichia coli (strain K12).